Here is a 460-residue protein sequence, read N- to C-terminus: Cysteine--tRNA ligase (460 aa).

Residue Cys28 coordinates Zn(2+). The 'HIGH' region motif lies at 30–40; the sequence is VTIYDLCHIGH. The Zn(2+) site is built by Cys209, His234, and Glu238. The 'KMSKS' region signature appears at 266–270; sequence KMSKS. Lys269 contacts ATP.

It belongs to the class-I aminoacyl-tRNA synthetase family. As to quaternary structure, monomer. The cofactor is Zn(2+).

Its subcellular location is the cytoplasm. It carries out the reaction tRNA(Cys) + L-cysteine + ATP = L-cysteinyl-tRNA(Cys) + AMP + diphosphate. The protein is Cysteine--tRNA ligase of Vibrio vulnificus (strain CMCP6).